Reading from the N-terminus, the 253-residue chain is Ubiquinone/menaquinone biosynthesis C-methyltransferase UbiE (253 aa).

S-adenosyl-L-methionine-binding positions include T76, D97, 125–126 (NA), and S142.

Belongs to the class I-like SAM-binding methyltransferase superfamily. MenG/UbiE family.

It carries out the reaction a 2-demethylmenaquinol + S-adenosyl-L-methionine = a menaquinol + S-adenosyl-L-homocysteine + H(+). The enzyme catalyses a 2-methoxy-6-(all-trans-polyprenyl)benzene-1,4-diol + S-adenosyl-L-methionine = a 5-methoxy-2-methyl-3-(all-trans-polyprenyl)benzene-1,4-diol + S-adenosyl-L-homocysteine + H(+). It functions in the pathway quinol/quinone metabolism; menaquinone biosynthesis; menaquinol from 1,4-dihydroxy-2-naphthoate: step 2/2. The protein operates within cofactor biosynthesis; ubiquinone biosynthesis. Functionally, methyltransferase required for the conversion of demethylmenaquinol (DMKH2) to menaquinol (MKH2) and the conversion of 2-polyprenyl-6-methoxy-1,4-benzoquinol (DDMQH2) to 2-polyprenyl-3-methyl-6-methoxy-1,4-benzoquinol (DMQH2). This Xanthomonas axonopodis pv. citri (strain 306) protein is Ubiquinone/menaquinone biosynthesis C-methyltransferase UbiE.